The following is a 59-amino-acid chain: MPKIIEAVYENGVFKPLQKVDLREGEKVKIIAGNLVERLRKYRVKVDSDIVAEFISERR.

This sequence belongs to the UPF0165 family.

In terms of biological role, possibly the antitoxin component of a type II toxin-antitoxin (TA) system. In Archaeoglobus fulgidus (strain ATCC 49558 / DSM 4304 / JCM 9628 / NBRC 100126 / VC-16), this protein is Putative antitoxin AF_1090.